A 602-amino-acid chain; its full sequence is Elongation factor 4 (602 aa).

The 183-residue stretch at 6–188 (KYIRNFCIIA…AIIRRVPPPR (183 aa)) folds into the tr-type G domain. GTP contacts are provided by residues 18–23 (DHGKST) and 135–138 (NKID).

Belongs to the TRAFAC class translation factor GTPase superfamily. Classic translation factor GTPase family. LepA subfamily.

It localises to the cell membrane. It catalyses the reaction GTP + H2O = GDP + phosphate + H(+). Functionally, required for accurate and efficient protein synthesis under certain stress conditions. May act as a fidelity factor of the translation reaction, by catalyzing a one-codon backward translocation of tRNAs on improperly translocated ribosomes. Back-translocation proceeds from a post-translocation (POST) complex to a pre-translocation (PRE) complex, thus giving elongation factor G a second chance to translocate the tRNAs correctly. Binds to ribosomes in a GTP-dependent manner. The protein is Elongation factor 4 of Moorella thermoacetica (strain ATCC 39073 / JCM 9320).